Reading from the N-terminus, the 652-residue chain is Acetyl-coenzyme A synthetase (652 aa).

CoA-binding positions include 191–194, threonine 311, and asparagine 335; that span reads RAGR. Residues 387–389, 411–416, aspartate 500, and arginine 515 contribute to the ATP site; these read GEP and DTWWQT. Serine 523 provides a ligand contact to CoA. Position 526 (arginine 526) interacts with ATP. 3 residues coordinate Mg(2+): valine 537, histidine 539, and isoleucine 542. Arginine 584 contacts CoA. Lysine 609 carries the N6-acetyllysine; by autocatalysis modification.

Belongs to the ATP-dependent AMP-binding enzyme family. In terms of assembly, forms a 1:1 complex with CobB/NAD-dependent deacetylase. Mg(2+) serves as cofactor. Autoacetylated. Deacetylation by CobB activates the enzyme.

The catalysed reaction is acetate + ATP + CoA = acetyl-CoA + AMP + diphosphate. Functionally, catalyzes the conversion of acetate into acetyl-CoA (AcCoA), an essential intermediate at the junction of anabolic and catabolic pathways. Acs undergoes a two-step reaction. In the first half reaction, Acs combines acetate with ATP to form acetyl-adenylate (AcAMP) intermediate. In the second half reaction, it can then transfer the acetyl group from AcAMP to the sulfhydryl group of CoA, forming the product AcCoA. Enables the cell to use acetate during aerobic growth to generate energy via the TCA cycle, and biosynthetic compounds via the glyoxylate shunt. Acetylates CheY, the response regulator involved in flagellar movement and chemotaxis. The polypeptide is Acetyl-coenzyme A synthetase (Escherichia coli (strain K12)).